The following is a 176-amino-acid chain: Large ribosomal subunit protein uL6 (176 aa).

The span at 153-170 (PEPYKGKGIRYGDEEVRR) shows a compositional bias: basic and acidic residues. A disordered region spans residues 153 to 176 (PEPYKGKGIRYGDEEVRRKEAKKK).

The protein belongs to the universal ribosomal protein uL6 family. As to quaternary structure, part of the 50S ribosomal subunit.

This protein binds to the 23S rRNA, and is important in its secondary structure. It is located near the subunit interface in the base of the L7/L12 stalk, and near the tRNA binding site of the peptidyltransferase center. The sequence is that of Large ribosomal subunit protein uL6 from Chromohalobacter salexigens (strain ATCC BAA-138 / DSM 3043 / CIP 106854 / NCIMB 13768 / 1H11).